The following is a 295-amino-acid chain: MNRLKSDQKTKLRQFVQWTQVTEAVSLNFLAKANWNIEYAMTLYFDNPNLFAGSTPQPSVDRSNIERLFNQYVDPKDKVGEKRMGPHGINRLLTDLGYEATDRRVLVLAWKFTAQTQCEFSLDEWVKGMTALQADTVQNLRQRIDSINSGLESDKAKFHELYLFAFNYAKSAACRNLDLETAICCWDVLFGQRSTIMTQWIDFLWAQENAAASRLAQNVGASNAKQFKSVWISRDTWNLFWDFILLSKPDLSDYDDEGAWPVLIDQFVDYCRENLNYPKPGNASNDQQMETPSYY.

Residues 8–45 (QKTKLRQFVQWTQVTEAVSLNFLAKANWNIEYAMTLYF) form the UBA-like domain. One can recognise a DCUN1 domain in the interval 60–272 (VDRSNIERLF…LIDQFVDYCR (213 aa)).

Interacts with the cullin cul-3. Interacts with ubiquitin via its UBA-like domain. Interacts with ned-8/nedd8.

The protein resides in the nucleus. In terms of biological role, required for neddylation of cullin components of SCF-type E3 ubiquitin ligase complexes. Neddylation of cullins play an essential role in the regulation of SCF-type complexes activity. Does not act by preventing deneddylation, but rather facilitates neddylation, possibly by acting with rbx-1 to recruit the Nedd8-charged E2 enzyme to the cullin component of SCF-type complexes. The chain is Defective in cullin neddylation protein 1 (dcn-1) from Caenorhabditis elegans.